A 77-amino-acid polypeptide reads, in one-letter code: MNQEIFEKVKKIVVEQLEVDPDKVTPDATFAEDLGADSLDTVELVMALEEEFDIEIPDEVAETIDTVGKAVEHIESK.

In terms of domain architecture, Carrier spans 3-77; that stretch reads QEIFEKVKKI…GKAVEHIESK (75 aa). At Ser38 the chain carries O-(pantetheine 4'-phosphoryl)serine.

The protein belongs to the acyl carrier protein (ACP) family. 4'-phosphopantetheine is transferred from CoA to a specific serine of apo-ACP by AcpS. This modification is essential for activity because fatty acids are bound in thioester linkage to the sulfhydryl of the prosthetic group.

Its subcellular location is the cytoplasm. Its pathway is lipid metabolism; fatty acid biosynthesis. Its function is as follows. Carrier of the growing fatty acid chain in fatty acid biosynthesis. This is Acyl carrier protein from Synechocystis sp. (strain ATCC 27184 / PCC 6803 / Kazusa).